Reading from the N-terminus, the 196-residue chain is 3-isopropylmalate dehydratase small subunit (196 aa).

Belongs to the LeuD family. LeuD type 1 subfamily. In terms of assembly, heterodimer of LeuC and LeuD.

The enzyme catalyses (2R,3S)-3-isopropylmalate = (2S)-2-isopropylmalate. The protein operates within amino-acid biosynthesis; L-leucine biosynthesis; L-leucine from 3-methyl-2-oxobutanoate: step 2/4. Functionally, catalyzes the isomerization between 2-isopropylmalate and 3-isopropylmalate, via the formation of 2-isopropylmaleate. The sequence is that of 3-isopropylmalate dehydratase small subunit from Streptococcus gordonii (strain Challis / ATCC 35105 / BCRC 15272 / CH1 / DL1 / V288).